A 555-amino-acid polypeptide reads, in one-letter code: MIWVAVVITMLLFILVAKPTGIYLEKAFQGSKKLDKVFGPFEKLIFKITGVKEYNQTWKQYALSLVLLNGFMIVVVYFIFRLQGVLPLNPAHIEGMEPTLAFNTAISFMADTNLQHYSGENGLSYLSQLIGITFLMFAAPATTLALVMAFIRGLAGKELGNFFIDFTRALTRVFLPIAFMAALVFVALGVPQTLDGAVTAQTIDGAKQSILRGPVASFVAIKELGNNGGGFFGANSTHPFENPGQMSNILQMMLMMLLPTALPFTYGRMVGNKKQGRILFVSLFMVFLLGFITITTSELNGNPALNAMGIERVQGSTEGKEVRFGTVFSSLYATVTTAAETGAVNTMHDTLTPIGGLVPLVNMMLNTVYGGVGAGFVNIIMYAIIAVFISGLMVGRTPEFLGKKIEGKEMKLIAVTILFHPLLILGFSALALSTSLGTDAISHSGFHGLTQVVYEYTSSAANNGSGFEGLGDNTPFWNITTGLVMFLGRYFSLITMLAVAASLKEKTVVPETVGTFRTDNGLFGGIFIGTIVIVGALTFFPMLVLGPIAEFLTLK.

10 helical membrane passes run Ile2 to Ile22, Gln60 to Phe80, Ile130 to Phe150, Val173 to Thr193, Met246 to Tyr266, Ile278 to Glu298, Ala374 to Val394, Leu412 to Leu432, Leu483 to Leu503, and Gly525 to Leu545.

The protein belongs to the KdpA family. In terms of assembly, the system is composed of three essential subunits: KdpA, KdpB and KdpC.

It is found in the cell membrane. Its function is as follows. Part of the high-affinity ATP-driven potassium transport (or Kdp) system, which catalyzes the hydrolysis of ATP coupled with the electrogenic transport of potassium into the cytoplasm. This subunit binds the extracellular potassium ions and delivers the ions to the membrane domain of KdpB through an intramembrane tunnel. In Bacillus thuringiensis (strain Al Hakam), this protein is Potassium-transporting ATPase potassium-binding subunit.